Consider the following 319-residue polypeptide: Acetyl-coenzyme A carboxylase carboxyl transferase subunit alpha (319 aa).

In terms of domain architecture, CoA carboxyltransferase C-terminal spans 35 to 296; the sequence is NIDEEVHRLR…KAQLLEDLAD (262 aa).

Belongs to the AccA family. In terms of assembly, acetyl-CoA carboxylase is a heterohexamer composed of biotin carboxyl carrier protein (AccB), biotin carboxylase (AccC) and two subunits each of ACCase subunit alpha (AccA) and ACCase subunit beta (AccD).

It is found in the cytoplasm. It catalyses the reaction N(6)-carboxybiotinyl-L-lysyl-[protein] + acetyl-CoA = N(6)-biotinyl-L-lysyl-[protein] + malonyl-CoA. The protein operates within lipid metabolism; malonyl-CoA biosynthesis; malonyl-CoA from acetyl-CoA: step 1/1. Functionally, component of the acetyl coenzyme A carboxylase (ACC) complex. First, biotin carboxylase catalyzes the carboxylation of biotin on its carrier protein (BCCP) and then the CO(2) group is transferred by the carboxyltransferase to acetyl-CoA to form malonyl-CoA. In Salmonella agona (strain SL483), this protein is Acetyl-coenzyme A carboxylase carboxyl transferase subunit alpha.